Reading from the N-terminus, the 906-residue chain is Aconitate hydratase A (906 aa).

Residues Cys-443, Cys-509, and Cys-512 each contribute to the [4Fe-4S] cluster site.

It belongs to the aconitase/IPM isomerase family. Monomer. [4Fe-4S] cluster serves as cofactor.

It carries out the reaction citrate = D-threo-isocitrate. It catalyses the reaction (2S,3R)-3-hydroxybutane-1,2,3-tricarboxylate = 2-methyl-cis-aconitate + H2O. The protein operates within carbohydrate metabolism; tricarboxylic acid cycle; isocitrate from oxaloacetate: step 2/2. It functions in the pathway organic acid metabolism; propanoate degradation. Involved in the catabolism of short chain fatty acids (SCFA) via the tricarboxylic acid (TCA)(acetyl degradation route) and probably via the 2-methylcitrate cycle I (propionate degradation route). Catalyzes the reversible isomerization of citrate to isocitrate via cis-aconitate. Could catalyze the hydration of 2-methyl-cis-aconitate to yield (2R,3S)-2-methylisocitrate. The apo form of AcnA functions as a RNA-binding regulatory protein. This Bradyrhizobium diazoefficiens (strain JCM 10833 / BCRC 13528 / IAM 13628 / NBRC 14792 / USDA 110) protein is Aconitate hydratase A.